Consider the following 934-residue polypeptide: Aconitate hydratase A (934 aa).

A disordered region spans residues E398 to N454. Positions L404–E420 are enriched in basic and acidic residues. Low complexity predominate over residues S427–S445. Residues C473, C539, and C542 each contribute to the [4Fe-4S] cluster site.

Belongs to the aconitase/IPM isomerase family. Monomer. The cofactor is [4Fe-4S] cluster.

The catalysed reaction is citrate = D-threo-isocitrate. The enzyme catalyses (2S,3R)-3-hydroxybutane-1,2,3-tricarboxylate = 2-methyl-cis-aconitate + H2O. It participates in carbohydrate metabolism; tricarboxylic acid cycle; isocitrate from oxaloacetate: step 2/2. Its pathway is organic acid metabolism; propanoate degradation. In terms of biological role, involved in the catabolism of short chain fatty acids (SCFA) via the tricarboxylic acid (TCA)(acetyl degradation route) and probably via the 2-methylcitrate cycle I (propionate degradation route). Catalyzes the reversible isomerization of citrate to isocitrate via cis-aconitate. Could catalyze the hydration of 2-methyl-cis-aconitate to yield (2R,3S)-2-methylisocitrate. The apo form of AcnA functions as a RNA-binding regulatory protein. This chain is Aconitate hydratase A (acn), found in Corynebacterium diphtheriae (strain ATCC 700971 / NCTC 13129 / Biotype gravis).